A 534-amino-acid chain; its full sequence is CTP synthase (534 aa).

The tract at residues 1–267 (MTKYIFVTGG…DQIVCDHLKL (267 aa)) is amidoligase domain. Residue S13 coordinates CTP. S13 provides a ligand contact to UTP. 14–19 (SIGKGI) contacts ATP. Residue Y54 participates in L-glutamine binding. Residue D71 participates in ATP binding. D71 and E141 together coordinate Mg(2+). CTP is bound by residues 148-150 (DIE), 188-193 (KTKPTQ), and K224. UTP is bound by residues 188–193 (KTKPTQ) and K224. 240 to 242 (RNV) contacts ATP. A Glutamine amidotransferase type-1 domain is found at 292–534 (KIALVGKYVE…FVTAAIKNSN (243 aa)). L-glutamine is bound at residue G354. The active-site Nucleophile; for glutamine hydrolysis is C381. L-glutamine is bound by residues 382–385 (LGMQ), E405, and R463. Catalysis depends on residues H508 and E510.

The protein belongs to the CTP synthase family. As to quaternary structure, homotetramer.

It catalyses the reaction UTP + L-glutamine + ATP + H2O = CTP + L-glutamate + ADP + phosphate + 2 H(+). The catalysed reaction is L-glutamine + H2O = L-glutamate + NH4(+). The enzyme catalyses UTP + NH4(+) + ATP = CTP + ADP + phosphate + 2 H(+). It functions in the pathway pyrimidine metabolism; CTP biosynthesis via de novo pathway; CTP from UDP: step 2/2. Allosterically activated by GTP, when glutamine is the substrate; GTP has no effect on the reaction when ammonia is the substrate. The allosteric effector GTP functions by stabilizing the protein conformation that binds the tetrahedral intermediate(s) formed during glutamine hydrolysis. Inhibited by the product CTP, via allosteric rather than competitive inhibition. Catalyzes the ATP-dependent amination of UTP to CTP with either L-glutamine or ammonia as the source of nitrogen. Regulates intracellular CTP levels through interactions with the four ribonucleotide triphosphates. The sequence is that of CTP synthase from Streptococcus pyogenes serotype M28 (strain MGAS6180).